Reading from the N-terminus, the 559-residue chain is Dihydroxy-acid dehydratase (559 aa).

Cysteine 49 contributes to the [2Fe-2S] cluster binding site. Mg(2+) is bound at residue aspartate 81. Cysteine 122 provides a ligand contact to [2Fe-2S] cluster. Mg(2+) contacts are provided by aspartate 123 and lysine 124. Lysine 124 is modified (N6-carboxylysine). Cysteine 194 contacts [2Fe-2S] cluster. Glutamate 446 is a binding site for Mg(2+). The active-site Proton acceptor is the serine 472.

The protein belongs to the IlvD/Edd family. In terms of assembly, homodimer. It depends on [2Fe-2S] cluster as a cofactor. Mg(2+) serves as cofactor.

It catalyses the reaction (2R)-2,3-dihydroxy-3-methylbutanoate = 3-methyl-2-oxobutanoate + H2O. It carries out the reaction (2R,3R)-2,3-dihydroxy-3-methylpentanoate = (S)-3-methyl-2-oxopentanoate + H2O. It participates in amino-acid biosynthesis; L-isoleucine biosynthesis; L-isoleucine from 2-oxobutanoate: step 3/4. It functions in the pathway amino-acid biosynthesis; L-valine biosynthesis; L-valine from pyruvate: step 3/4. Functions in the biosynthesis of branched-chain amino acids. Catalyzes the dehydration of (2R,3R)-2,3-dihydroxy-3-methylpentanoate (2,3-dihydroxy-3-methylvalerate) into 2-oxo-3-methylpentanoate (2-oxo-3-methylvalerate) and of (2R)-2,3-dihydroxy-3-methylbutanoate (2,3-dihydroxyisovalerate) into 2-oxo-3-methylbutanoate (2-oxoisovalerate), the penultimate precursor to L-isoleucine and L-valine, respectively. This chain is Dihydroxy-acid dehydratase, found in Prochlorococcus marinus subsp. pastoris (strain CCMP1986 / NIES-2087 / MED4).